A 301-amino-acid chain; its full sequence is Probable porphobilinogen deaminase (301 aa).

Cysteine 241 is modified (S-(dipyrrolylmethanemethyl)cysteine).

This sequence belongs to the HMBS family. Requires dipyrromethane as cofactor.

The enzyme catalyses 4 porphobilinogen + H2O = hydroxymethylbilane + 4 NH4(+). Its pathway is porphyrin-containing compound metabolism; protoporphyrin-IX biosynthesis; coproporphyrinogen-III from 5-aminolevulinate: step 2/4. In terms of biological role, tetrapolymerization of the monopyrrole PBG into the hydroxymethylbilane pre-uroporphyrinogen in several discrete steps. The chain is Probable porphobilinogen deaminase from Pyrobaculum islandicum (strain DSM 4184 / JCM 9189 / GEO3).